The chain runs to 559 residues: Nucleolar protein 12 (559 aa).

The interval 24–194 (ASSAGPVQAP…AGNESDIPVH (171 aa)) is disordered. Positions 44–56 (QKVREPAKPKVHL) are enriched in basic and acidic residues. The span at 57–110 (EEDDEVLSEISEELSFEEDGPSDEDEDEDEDEENSEQEDGSGDEQEEEESEDVD) shows a compositional bias: acidic residues. Positions 141-180 (NDNDDLEGKYLDKVAAEEEADRAGKRQKNDALTKTEKPAV) are enriched in basic and acidic residues. 2 RRM domains span residues 211–320 (RTVF…SVAH) and 328–432 (RCVF…RAKD). Positions 429–559 (RAKDPRKTAL…RASEWKKKKN (131 aa)) are disordered. Basic and acidic residues-rich tracts occupy residues 516–532 (EGRR…DLKQ) and 550–559 (RASEWKKKKN).

This sequence belongs to the RRM RBM34 family.

Its subcellular location is the nucleus. The protein localises to the nucleolus. Functionally, involved in pre-25S rRNA processing. This chain is Nucleolar protein 12 (NOP12), found in Gibberella zeae (strain ATCC MYA-4620 / CBS 123657 / FGSC 9075 / NRRL 31084 / PH-1) (Wheat head blight fungus).